Here is a 448-residue protein sequence, read N- to C-terminus: Homogentisate 1,2-dioxygenase (448 aa).

Residue H303 is the Proton acceptor of the active site. Residues H346 and E352 each contribute to the Fe cation site. Homogentisate contacts are provided by Y361 and H382. H382 is a Fe cation binding site.

Belongs to the homogentisate dioxygenase family. In terms of assembly, hexamer; dimer of trimers. Fe cation is required as a cofactor.

The catalysed reaction is homogentisate + O2 = 4-maleylacetoacetate + H(+). It participates in amino-acid degradation; L-phenylalanine degradation; acetoacetate and fumarate from L-phenylalanine: step 4/6. Functionally, involved in the catabolism of homogentisate (2,5-dihydroxyphenylacetate or 2,5-OH-PhAc), a central intermediate in the degradation of phenylalanine and tyrosine. Catalyzes the oxidative ring cleavage of the aromatic ring of homogentisate to yield maleylacetoacetate. The polypeptide is Homogentisate 1,2-dioxygenase (Rhodopseudomonas palustris (strain HaA2)).